Consider the following 72-residue polypeptide: Exodeoxyribonuclease 7 small subunit (72 aa).

It belongs to the XseB family. In terms of assembly, heterooligomer composed of large and small subunits.

Its subcellular location is the cytoplasm. The enzyme catalyses Exonucleolytic cleavage in either 5'- to 3'- or 3'- to 5'-direction to yield nucleoside 5'-phosphates.. Functionally, bidirectionally degrades single-stranded DNA into large acid-insoluble oligonucleotides, which are then degraded further into small acid-soluble oligonucleotides. In Chlamydia trachomatis serovar A (strain ATCC VR-571B / DSM 19440 / HAR-13), this protein is Exodeoxyribonuclease 7 small subunit.